The sequence spans 630 residues: tRNA uridine 5-carboxymethylaminomethyl modification enzyme MnmG (630 aa).

An FAD-binding site is contributed by 15 to 20 (GAGHAG). 276 to 290 (GPRYCPSIEDKIVRF) contributes to the NAD(+) binding site.

Belongs to the MnmG family. As to quaternary structure, homodimer. Heterotetramer of two MnmE and two MnmG subunits. FAD is required as a cofactor.

It localises to the cytoplasm. In terms of biological role, NAD-binding protein involved in the addition of a carboxymethylaminomethyl (cmnm) group at the wobble position (U34) of certain tRNAs, forming tRNA-cmnm(5)s(2)U34. This chain is tRNA uridine 5-carboxymethylaminomethyl modification enzyme MnmG, found in Latilactobacillus sakei subsp. sakei (strain 23K) (Lactobacillus sakei subsp. sakei).